Here is a 1032-residue protein sequence, read N- to C-terminus: Connector enhancer of kinase suppressor of ras 2 (1032 aa).

Positions Trp-11–Leu-76 constitute an SAM domain. Ser-12 carries the phosphoserine modification. The region spanning Asn-84–Tyr-178 is the CRIC domain. The PDZ domain occupies Val-215–Pro-297. The 214-residue stretch at Thr-302–Leu-515 folds into the DUF1170 domain. Residues Arg-324–Pro-340 are compositionally biased toward low complexity. Positions Arg-324 to Gln-349 are disordered. Phosphoserine is present on residues Ser-338 and Ser-390. 2 disordered regions span residues Glu-480–Tyr-509 and Phe-538–Lys-558. The segment covering His-545–Lys-558 has biased composition (basic residues). In terms of domain architecture, PH spans Arg-570–Ala-669. Residues Asp-682 to Arg-766 are disordered. The residue at position 683 (Tyr-683) is a Phosphotyrosine. A compositionally biased stretch (acidic residues) spans Tyr-683–Asp-693. Ser-685 and Ser-687 each carry phosphoserine. Residues Asp-701–Pro-714 show a composition bias toward pro residues. Residues Leu-730–Ser-740 show a composition bias toward low complexity. Ser-756 and Ser-767 each carry phosphoserine. Positions Ala-864–Glu-900 are disordered. Residues Pro-874–Ala-917 adopt a coiled-coil conformation. A compositionally biased stretch (acidic residues) spans Glu-875 to Ala-888. At Ser-906 the chain carries Phosphoserine.

The protein belongs to the CNKSR family. In terms of assembly, interacts with RAF1, RAB2L and RAL GTPase proteins. In terms of processing, phosphorylated on tyrosine.

The protein localises to the cytoplasm. It localises to the membrane. In terms of biological role, may function as an adapter protein or regulator of Ras signaling pathways. The chain is Connector enhancer of kinase suppressor of ras 2 (Cnksr2) from Mus musculus (Mouse).